We begin with the raw amino-acid sequence, 300 residues long: Bifunctional protein FolD 2 (300 aa).

Residues 165 to 167 (GRS), Ser-190, and Ile-231 each bind NADP(+).

Belongs to the tetrahydrofolate dehydrogenase/cyclohydrolase family. Homodimer.

The enzyme catalyses (6R)-5,10-methylene-5,6,7,8-tetrahydrofolate + NADP(+) = (6R)-5,10-methenyltetrahydrofolate + NADPH. The catalysed reaction is (6R)-5,10-methenyltetrahydrofolate + H2O = (6R)-10-formyltetrahydrofolate + H(+). The protein operates within one-carbon metabolism; tetrahydrofolate interconversion. In terms of biological role, catalyzes the oxidation of 5,10-methylenetetrahydrofolate to 5,10-methenyltetrahydrofolate and then the hydrolysis of 5,10-methenyltetrahydrofolate to 10-formyltetrahydrofolate. The protein is Bifunctional protein FolD 2 of Pseudomonas syringae pv. tomato (strain ATCC BAA-871 / DC3000).